A 904-amino-acid polypeptide reads, in one-letter code: Exo-beta-D-glucosaminidase (904 aa).

An N-terminal signal peptide occupies residues 1 to 32 (MFHRPASVRRFVTTAVALGLLSTLSTGARAGA). The disordered stretch occupies residues 28–49 (ARAGARTHEPPPRPTTVSSTAG). D476 serves as the catalytic Proton donor. The active-site Nucleophile is E545. Over residues 813–828 (STTAGTDGASTTTVTV) the composition is skewed to low complexity. The segment at 813-833 (STTAGTDGASTTTVTVRNTGS) is disordered.

The protein belongs to the glycosyl hydrolase 2 family. Monomer.

It localises to the secreted. The enzyme catalyses Hydrolysis of chitosan or chitosan oligosaccharides to remove successive D-glucosamine residues from the non-reducing termini.. Its function is as follows. Hydrolyzes chitosan and chitooligosaccharides with retention of anomeric configuration. Has no beta-mannosidase activity. The polypeptide is Exo-beta-D-glucosaminidase (Streptomyces avermitilis (strain ATCC 31267 / DSM 46492 / JCM 5070 / NBRC 14893 / NCIMB 12804 / NRRL 8165 / MA-4680)).